The following is a 232-amino-acid chain: MKFQARVLTLYPEMFPGFLGYSLAGHALERGIWSLETVQIRDFALDKHHSVDDTPAGGGAGMVMRADVLAAALDHCPQDSPRLLMSPRGRPFDQAYARRLADDSGITLVCGRFEGVDERVIEARELEEVSIGDYILSGGETAALVILDAIIRLLPGVMGNKASAKCESFENGLLEHPQYTRPSLFEGREIPPVLTSGHHKAIADWRQSQAELLTRQRRPDLYARYDKNRQKT.

Residues G111 and 131 to 136 (IGDYIL) contribute to the S-adenosyl-L-methionine site.

The protein belongs to the RNA methyltransferase TrmD family. As to quaternary structure, homodimer.

It localises to the cytoplasm. It carries out the reaction guanosine(37) in tRNA + S-adenosyl-L-methionine = N(1)-methylguanosine(37) in tRNA + S-adenosyl-L-homocysteine + H(+). In terms of biological role, specifically methylates guanosine-37 in various tRNAs. This Bartonella tribocorum (strain CIP 105476 / IBS 506) protein is tRNA (guanine-N(1)-)-methyltransferase.